Here is a 383-residue protein sequence, read N- to C-terminus: Deoxyguanosinetriphosphate triphosphohydrolase-like protein (383 aa).

Residues 62–198 (RLTHSLEVST…AALADDISYI (137 aa)) form the HD domain.

Belongs to the dGTPase family. Type 2 subfamily.

This chain is Deoxyguanosinetriphosphate triphosphohydrolase-like protein, found in Rickettsia bellii (strain RML369-C).